Here is a 967-residue protein sequence, read N- to C-terminus: MCPALSTDLKQEVLTDPYESFMHHHLQYYGYFRGLEPREQFKLPVQRCRKVVTDSDSDMPSSQEDQKKLVYSLLLDSPVFKSRQLVFEDQEGKIIPRLREPKDLYGSSSQDGCWQQARWPSECEVIKQDISHIEWDPTDREIFYKPTGNEPKPPVVSEGTGAVVYEISPAHKGSYFKGSRTGGRKCSHRKNQKVQCNNDLQFESRFESGNLQKAMKVGMYEYELTLRTDLYTSKHTQWFYFQVKNTRKGVPYRFTITNLMKTNSLYNEGLKPLLYSQQDAALKGIGWRREGKDIKYYKNTRSLDGRSLYSLTWTFEFPHDDDICYFAHCYPYTYSDLQRDLKSKISDPACSHYCKLRTLCRSLAGNSIYLLTITSPSTNLTTGAKKKAIVVTARVHPGETNGSWMMKGFLDFILSDSPDAQLLRDTFIFKVVPMLNPDGVIVGNYRCSLSGRDLNRNYKSMLKDAFPCIWHTRSMVKRLLTEREVILYCDFHGHSRKNNVFMYGCNSKGHPLTKLHERIFPLMLSKNAPDKFLFKGCKFKVQKSKEGTGRIDMWKQGIQNSYTMEATFGGSTLGNRKDTHFTTQDLKSMGHHFCDTLLDYCDPDSSKFKLCLSELQRLVEEDIREKMKQLGRDMDSDFTLSDITLSDLESSTSGSNSSESDGLPAHLVDIAEKFYQKKKRRLRSRKERNSLYQKRNARQKQKLHEAVEVSEPAAHIVRNELTKSSGKRKKEQKVAKIKFQEDLVPQTEENLTTAAPTEKSSMLYSRKPESVSMKTQMINSLPTSCVRDFMDLDHVCERQMTIRPRPSANGNRLPLIITVVQQSTLPPVPKGISALKQHPPPFHSILDQSGDQLTVADHVFRRDKSVAKRGFSSAGIRPYCSGISGEKQKVLDGSIVPLDLHLSLSPEVHRQNKPRQEPLITLGSTEYFEGFLPKPKTDPVRRFPGISSSEPHFPNSSEDITVRNTMK.

The Peptidase M14 domain maps to 330 to 601 (YPYTYSDLQR…HFCDTLLDYC (272 aa)). Zn(2+)-binding residues include H396, E399, and H492. E565 functions as the Proton donor/acceptor in the catalytic mechanism. Disordered regions lie at residues 679 to 706 (KRRLRSRKERNSLYQKRNARQKQKLHEA) and 944 to 967 (PGISSSEPHFPNSSEDITVRNTMK). Residues 946–967 (ISSSEPHFPNSSEDITVRNTMK) are compositionally biased toward polar residues.

The protein belongs to the peptidase M14 family. Zn(2+) is required as a cofactor.

The protein localises to the cytoplasm. The protein resides in the cytosol. It is found in the cytoskeleton. It localises to the microtubule organizing center. Its subcellular location is the centrosome. The protein localises to the centriole. The protein resides in the cilium basal body. The enzyme catalyses (L-glutamyl)(n+1)-gamma-L-glutamyl-L-glutamyl-[protein] + H2O = (L-glutamyl)(n)-gamma-L-glutamyl-L-glutamyl-[protein] + L-glutamate. Metallocarboxypeptidase that mediates deglutamylation of target proteins. Catalyzes the deglutamylation of polyglutamate side chains generated by post-translational polyglutamylation in proteins such as tubulins. Also removes gene-encoded polyglutamates from the carboxy-terminus of target proteins such as MYLK. Does not show detyrosinase or deglycylase activities from the carboxy-terminus of tubulin. Its function is as follows. Metallocarboxypeptidase that mediates deglutamylation of tubulin and non-tubulin target proteins. Catalyzes the removal of polyglutamate side chains present on the gamma-carboxyl group of glutamate residues within the C-terminal tail of tubulin protein. Specifically cleaves tubulin long-side-chains, while it is not able to remove the branching point glutamate. Also catalyzes the removal of polyglutamate residues from the carboxy-terminus of non-tubulin proteins. This chain is Cytosolic carboxypeptidase 2 (agbl2), found in Xenopus tropicalis (Western clawed frog).